The primary structure comprises 82 residues: Large ribosomal subunit protein uL23 (82 aa).

It belongs to the universal ribosomal protein uL23 family. In terms of assembly, part of the 50S ribosomal subunit. Contacts protein L29.

Binds to 23S rRNA. One of the proteins that surrounds the polypeptide exit tunnel on the outside of the ribosome. This Sulfurisphaera tokodaii (strain DSM 16993 / JCM 10545 / NBRC 100140 / 7) (Sulfolobus tokodaii) protein is Large ribosomal subunit protein uL23.